A 92-amino-acid polypeptide reads, in one-letter code: Small ribosomal subunit protein uS19 (92 aa).

The protein belongs to the universal ribosomal protein uS19 family.

In terms of biological role, protein S19 forms a complex with S13 that binds strongly to the 16S ribosomal RNA. The sequence is that of Small ribosomal subunit protein uS19 from Bartonella quintana (strain Toulouse) (Rochalimaea quintana).